Here is a 215-residue protein sequence, read N- to C-terminus: Variable small protein 6 (215 aa).

A signal peptide spans 1 to 18; that stretch reads MRKRISAIIMTLFMVFMS. Cys19 carries the N-palmitoyl cysteine lipid modification. A lipid anchor (S-diacylglycerol cysteine) is attached at Cys19.

The protein belongs to the variable small protein (Vsp) family.

The protein resides in the cell outer membrane. The Vlp and Vsp proteins are antigenically distinct proteins, only one vlp or vsp gene is transcriptionally active at any one time. Switching between these genes is a mechanism of host immune response evasion. The polypeptide is Variable small protein 6 (Borrelia hermsii).